Reading from the N-terminus, the 289-residue chain is RNA-binding protein CP31B, chloroplastic (289 aa).

The transit peptide at 1–71 directs the protein to the chloroplast; the sequence is MTSSVLTPSL…NSSPVVTFVS (71 aa). 2 RRM domains span residues 113–191 and 207–285; these read AKLF…RAAP and FRIY…VAEE.

Post-translationally, ADP-ribosylated by the Pseudomonas syringae type III effector HopU1. ADP-ribosylation reduces the ability of the protein to bind RNA.

Its subcellular location is the plastid. It localises to the chloroplast. In terms of biological role, required for specific RNA editing events in chloroplasts and stabilizes specific chloroplast mRNAs. The protein is RNA-binding protein CP31B, chloroplastic of Arabidopsis thaliana (Mouse-ear cress).